Here is a 249-residue protein sequence, read N- to C-terminus: MAAGMYLEHYLDSIENLPFELQRNFQLMRDLDQRTEDLKSEIDKLATEYISNARTLSSEEKLGLLKQIQEAYGKCKEFGDDKVQLAMQTYEMVDKHIRRLDTDLARFEADLKEKQIESSDYDSSSSKGKKKGRAQKEKKAARARSKGKNSDEEAPKTAQKKLKLVRTSTEYGMPSVTFGNVHPSDVLDMPVDPNEPTYCLCHQVSYGEMIGCDNPDCSIEWFHFACVGLTTKPRGKWFCPRCSQERKKK.

A coiled-coil region spans residues Phe-25 to Ser-118. The segment at Gln-115–Lys-160 is disordered. Residues Pro-196–Glu-245 form a PHD-type zinc finger. Zn(2+) is bound by residues Cys-199, Cys-201, Cys-212, Cys-217, His-223, Cys-226, Cys-239, and Cys-242.

Belongs to the ING family. As to quaternary structure, homodimer. Component of the HBO1 complex.

It localises to the nucleus. In terms of biological role, component of HBO1 complexes, which specifically mediate acetylation of histone H3 at 'Lys-14' (H3K14ac), and have reduced activity toward histone H4. Through chromatin acetylation it may function in DNA replication. The polypeptide is Inhibitor of growth protein 4 (ING4) (Gallus gallus (Chicken)).